The chain runs to 349 residues: Twinfilin-2 (349 aa).

The residue at position 2 (Ala2) is an N-acetylalanine. 2 consecutive ADF-H domains span residues 4 to 139 (QTGI…KHLS) and 177 to 313 (GLAF…DEVH). Lys14 is modified (N6-acetyllysine). Position 309 is a phosphotyrosine (Tyr309). Residues 322–349 (AFAKPKGPGGKRGHKRLIRGPGENGEDS) are disordered. A compositionally biased stretch (basic residues) spans 330-339 (GGKRGHKRLI). Ser349 is modified (phosphoserine).

It belongs to the actin-binding proteins ADF family. Twinfilin subfamily. In terms of assembly, interacts with G-actin; ADP-actin form and capping protein (CP). Isoform 2 interacts (via its N-terminal ADF-H domain) with G-actin (ADP-bound form) with significantly higher affinity than isoform 1. May also be able to interact with TWF1 and phosphoinositides, PI(4,5)P2. When bound to PI(4,5)P2, it is down-regulated. Interacts with MYO7A. Post-translationally, phosphorylated on both serine/threonine and tyrosine. As to expression, isoform 1 is ubiquitously expressed (at protein level). Isoform 2 expression is restricted to heart and skeletal muscle where it is the predominant form.

It is found in the cytoplasm. The protein localises to the cytoskeleton. Its subcellular location is the perinuclear region. It localises to the cell projection. The protein resides in the stereocilium. In terms of biological role, actin-binding protein involved in motile and morphological processes. Inhibits actin polymerization, likely by sequestering G-actin. By capping the barbed ends of filaments, it also regulates motility. Seems to play an important role in clathrin-mediated endocytosis and distribution of endocytic organelles. May play a role in regulating the mature length of the middle and short rows of stereocilia. In Mus musculus (Mouse), this protein is Twinfilin-2 (Twf2).